A 35-amino-acid polypeptide reads, in one-letter code: Phospholipase A2 neuwieditoxin-1 (35 aa).

Ca(2+)-binding residues include Tyr27, Gly29, and Gly31.

It belongs to the phospholipase A2 family. Group II subfamily. D49 sub-subfamily. In terms of assembly, dimer. Ca(2+) is required as a cofactor. As to expression, expressed by the venom gland.

The protein localises to the secreted. The enzyme catalyses a 1,2-diacyl-sn-glycero-3-phosphocholine + H2O = a 1-acyl-sn-glycero-3-phosphocholine + a fatty acid + H(+). Snake venom phospholipase A2 (PLA2) that shows presynaptic neurotoxicity. 10 ug/ml of this protein produce complete neuromuscular blockade up to 80 minutes, without inhibiting the responses to acetylcholine (ACh) and potassium chloride (KCl). In addition, it produces a calcium-dependent blockade of acetylcholine release and causes appearance of giant miniature end-plate potentials. PLA2 catalyzes the calcium-dependent hydrolysis of the 2-acyl groups in 3-sn-phosphoglycerides. The polypeptide is Phospholipase A2 neuwieditoxin-1 (Bothrops pauloensis (Neuwied's lancehead)).